A 212-amino-acid polypeptide reads, in one-letter code: 3,4-dihydroxy-2-butanone 4-phosphate synthase (212 aa).

D-ribulose 5-phosphate-binding positions include 37–38 (RE), aspartate 42, 150–154 (RRGHT), and glutamate 174. A Mg(2+)-binding site is contributed by glutamate 38. Position 153 (histidine 153) interacts with Mg(2+).

The protein belongs to the DHBP synthase family. In terms of assembly, homodimer. The cofactor is Mg(2+). Requires Mn(2+) as cofactor.

It catalyses the reaction D-ribulose 5-phosphate = (2S)-2-hydroxy-3-oxobutyl phosphate + formate + H(+). It functions in the pathway cofactor biosynthesis; riboflavin biosynthesis; 2-hydroxy-3-oxobutyl phosphate from D-ribulose 5-phosphate: step 1/1. Its function is as follows. Catalyzes the conversion of D-ribulose 5-phosphate to formate and 3,4-dihydroxy-2-butanone 4-phosphate. This Histophilus somni (strain 129Pt) (Haemophilus somnus) protein is 3,4-dihydroxy-2-butanone 4-phosphate synthase.